The sequence spans 294 residues: Enoyl-CoA hydratase domain-containing protein 3, mitochondrial (294 aa).

The N-terminal 61 residues, 1 to 61 (MSWLRSCGER…IILNNPQQRN (61 aa)), are a transit peptide targeting the mitochondrion.

Belongs to the enoyl-CoA hydratase/isomerase family.

Its subcellular location is the mitochondrion. Functionally, may play a role in fatty acid biosynthesis and insulin sensitivity. The protein is Enoyl-CoA hydratase domain-containing protein 3, mitochondrial (echdc3) of Xenopus laevis (African clawed frog).